The following is a 333-amino-acid chain: Na(+)-translocating ferredoxin:NAD(+) oxidoreductase complex subunit B (333 aa).

Positions 1–27 are hydrophobic; the sequence is MLNAILVPVGILGVFGLIFGIGLAIAA. Residues 33 to 92 enclose the 4Fe-4S domain; sequence YEDPRVPLVRAALPGANCGGCGLPGCDALAANIVGGSAAIDACPVGGASCAAAVAEIMGM. [4Fe-4S] cluster is bound by residues Cys-50, Cys-53, Cys-58, Cys-75, Cys-138, Cys-142, Cys-148, Cys-152, Cys-172, Cys-175, Cys-178, Cys-182, Cys-217, Cys-220, Cys-223, Cys-227, Cys-246, Cys-249, Cys-252, Cys-256, Cys-279, Cys-282, Cys-285, Cys-289, Cys-310, Cys-313, Cys-316, and Cys-320. 6 4Fe-4S ferredoxin-type domains span residues 126–162, 163–192, 207–237, 239–266, 270–299, and 301–330; these read REAM…IGED, GLPK…LVPE, KIAR…VENN, AKID…GDVE, STAY…GEIK, and PPYV…MRPN.

The protein belongs to the 4Fe4S bacterial-type ferredoxin family. RnfB subfamily. In terms of assembly, the complex is composed of six subunits: RnfA, RnfB, RnfC, RnfD, RnfE and RnfG. [4Fe-4S] cluster is required as a cofactor.

It is found in the cell membrane. It carries out the reaction 2 reduced [2Fe-2S]-[ferredoxin] + Na(+)(in) + NAD(+) + H(+) = 2 oxidized [2Fe-2S]-[ferredoxin] + Na(+)(out) + NADH. Functionally, part of a membrane-bound complex that couples electron transfer with translocation of ions across the membrane. Couples electron transfer from reduced ferredoxin to NAD(+) with electrogenic movement of Na(+) out of the cell. Involved in caffeate respiration. This is Na(+)-translocating ferredoxin:NAD(+) oxidoreductase complex subunit B from Acetobacterium woodii (strain ATCC 29683 / DSM 1030 / JCM 2381 / KCTC 1655 / WB1).